A 514-amino-acid polypeptide reads, in one-letter code: Maltose/maltodextrin transport system permease protein MalF (514 aa).

Residues 1-12 (MDAVKKKHWWQS) are Cytoplasmic-facing. Residues 13–35 (PQLTWSVIGLLCLLVGYLVVLMY) form a helical membrane-spanning segment. The Periplasmic segment spans residues 36–39 (AQGE). Residues 40–57 (YLFAIMTLILSSVGLYIF) form a helical membrane-spanning segment. The Cytoplasmic portion of the chain corresponds to 58-69 (SNRKAYAWRYVY). A helical membrane pass occupies residues 70–92 (PGLAGMGLFVLFPLICTIAIAFT). The Periplasmic segment spans residues 93-283 (NYSSTNQLTF…QKPFFAIFVW (191 aa)). The region spanning 281–505 (FVWTVVFSVL…LLVGALAIVN (225 aa)) is the ABC transmembrane type-1 domain. A helical transmembrane segment spans residues 284-306 (TVVFSVLTVILTVAVGMVLACLV). Residues 307 to 318 (QWEALKGKAIYR) are Cytoplasmic-facing. Residues 319 to 341 (VLLILPYAVPSFISILIFKGLFN) form a helical membrane-spanning segment. Residues 342–369 (QSFGEINMMLSALFGIKPAWFSDPTTAR) are Periplasmic-facing. A helical transmembrane segment spans residues 370 to 392 (TMIIIVNTWLGYPYMMILCMGLL). Residues 393–412 (KAIPDDLYEASAMDGAGPFQ) lie on the Cytoplasmic side of the membrane. The helical transmembrane segment at 413–435 (NFFKITLPLLIKPLTPLMIASFA) threads the bilayer. The Periplasmic segment spans residues 436 to 483 (FNFNNFVLIQLLTNGGPDRLGTTTPAGYTDLLVSYTYRIAFEGGGGQD). The chain crosses the membrane as a helical span at residues 484 to 506 (FGLAAAIATLIFLLVGALAIVNL). The Cytoplasmic portion of the chain corresponds to 507 to 514 (KATRMKFD).

This sequence belongs to the binding-protein-dependent transport system permease family. MalFG subfamily. The complex is composed of two ATP-binding proteins (MalK), two transmembrane proteins (MalG and MalF) and a solute-binding protein (MalE).

It is found in the cell inner membrane. Its function is as follows. Part of the ABC transporter complex MalEFGK involved in maltose/maltodextrin import. Probably responsible for the translocation of the substrate across the membrane. This is Maltose/maltodextrin transport system permease protein MalF (malF) from Klebsiella aerogenes (Enterobacter aerogenes).